Here is a 145-residue protein sequence, read N- to C-terminus: SsrA-binding protein (145 aa).

It belongs to the SmpB family.

The protein resides in the cytoplasm. Functionally, required for rescue of stalled ribosomes mediated by trans-translation. Binds to transfer-messenger RNA (tmRNA), required for stable association of tmRNA with ribosomes. tmRNA and SmpB together mimic tRNA shape, replacing the anticodon stem-loop with SmpB. tmRNA is encoded by the ssrA gene; the 2 termini fold to resemble tRNA(Ala) and it encodes a 'tag peptide', a short internal open reading frame. During trans-translation Ala-aminoacylated tmRNA acts like a tRNA, entering the A-site of stalled ribosomes, displacing the stalled mRNA. The ribosome then switches to translate the ORF on the tmRNA; the nascent peptide is terminated with the 'tag peptide' encoded by the tmRNA and targeted for degradation. The ribosome is freed to recommence translation, which seems to be the essential function of trans-translation. The protein is SsrA-binding protein of Mycoplasma genitalium (strain ATCC 33530 / DSM 19775 / NCTC 10195 / G37) (Mycoplasmoides genitalium).